A 187-amino-acid polypeptide reads, in one-letter code: Threonylcarbamoyl-AMP synthase (187 aa).

A YrdC-like domain is found at 4–187 (TLTLSEAVTA…DARSGHILRL (184 aa)).

The protein belongs to the SUA5 family. TsaC subfamily.

It is found in the cytoplasm. The enzyme catalyses L-threonine + hydrogencarbonate + ATP = L-threonylcarbamoyladenylate + diphosphate + H2O. Its function is as follows. Required for the formation of a threonylcarbamoyl group on adenosine at position 37 (t(6)A37) in tRNAs that read codons beginning with adenine. Catalyzes the conversion of L-threonine, HCO(3)(-)/CO(2) and ATP to give threonylcarbamoyl-AMP (TC-AMP) as the acyladenylate intermediate, with the release of diphosphate. The chain is Threonylcarbamoyl-AMP synthase from Xylella fastidiosa (strain M12).